The chain runs to 71 residues: Omega-conotoxin SO-3 (71 aa).

Residues 1-22 form the signal peptide; the sequence is MKLTCMVIVAVLLLTACQLITA. Positions 23 to 45 are excised as a propeptide; sequence DDSRGTQKHRTLRSKTKLSMSTR. Cystine bridges form between cysteine 46/cysteine 61, cysteine 53/cysteine 65, and cysteine 60/cysteine 70. Cysteine 70 carries the cysteine amide modification.

This sequence belongs to the conotoxin O1 superfamily. As to expression, expressed by the venom duct.

The protein localises to the secreted. Functionally, omega-conotoxins act at presynaptic membranes, they bind and block voltage-gated calcium channels (Cav). This peptide selectively targets Cav2.2/CACNA1B (IC(50)=160 nM) voltage-gated calcium channels. When tested in mammals, this toxin displays an analgesic potency similar to MVIIA in a range of acute and chronic pain models in rodents, but has less adverse effects (tremor, diminution of spontaneous locomotor activity and bad coordinated locomotion) compared with identical dosages of MVIIA injected intrathecally. This chain is Omega-conotoxin SO-3, found in Conus striatus (Striated cone).